We begin with the raw amino-acid sequence, 371 residues long: Transaldolase (371 aa).

K140 serves as the catalytic Schiff-base intermediate with substrate.

It belongs to the transaldolase family. Type 2 subfamily.

Its subcellular location is the cytoplasm. The catalysed reaction is D-sedoheptulose 7-phosphate + D-glyceraldehyde 3-phosphate = D-erythrose 4-phosphate + beta-D-fructose 6-phosphate. It participates in carbohydrate degradation; pentose phosphate pathway; D-glyceraldehyde 3-phosphate and beta-D-fructose 6-phosphate from D-ribose 5-phosphate and D-xylulose 5-phosphate (non-oxidative stage): step 2/3. Its function is as follows. Transaldolase is important for the balance of metabolites in the pentose-phosphate pathway. The polypeptide is Transaldolase (Arthrobacter sp. (strain FB24)).